The primary structure comprises 468 residues: WD repeat-containing protein 55 homolog (468 aa).

The interval 1-107 (MRNFNSPKFG…VPKRVIDDYD (107 aa)) is disordered. Composition is skewed to acidic residues over residues 15–26 (DDSDDDDFDSGT), 41–58 (PITE…EYNP), and 67–91 (SDDE…DGED). 6 WD repeats span residues 134–173 (KTED…CTIV), 178–217 (THTK…LKRF), 221–259 (AHEE…PVFK), 262–301 (EVED…MYVQ), 304–343 (PYEE…YHCD), and 388–427 (QHSL…EFDD).

It belongs to the WD repeat WDR55 family.

This Aedes aegypti (Yellowfever mosquito) protein is WD repeat-containing protein 55 homolog.